The chain runs to 72 residues: Translation initiation factor IF-1 (72 aa).

The region spanning 1–72 (MAKDDVIEIQ…TKGRITYRFK (72 aa)) is the S1-like domain.

It belongs to the IF-1 family. In terms of assembly, component of the 30S ribosomal translation pre-initiation complex which assembles on the 30S ribosome in the order IF-2 and IF-3, IF-1 and N-formylmethionyl-tRNA(fMet); mRNA recruitment can occur at any time during PIC assembly.

The protein resides in the cytoplasm. In terms of biological role, one of the essential components for the initiation of protein synthesis. Stabilizes the binding of IF-2 and IF-3 on the 30S subunit to which N-formylmethionyl-tRNA(fMet) subsequently binds. Helps modulate mRNA selection, yielding the 30S pre-initiation complex (PIC). Upon addition of the 50S ribosomal subunit IF-1, IF-2 and IF-3 are released leaving the mature 70S translation initiation complex. This chain is Translation initiation factor IF-1, found in Lacticaseibacillus paracasei (strain ATCC 334 / BCRC 17002 / CCUG 31169 / CIP 107868 / KCTC 3260 / NRRL B-441) (Lactobacillus paracasei).